We begin with the raw amino-acid sequence, 90 residues long: Protein RALF-like 3 (90 aa).

The signal sequence occupies residues 1-29 (MSNLRGTNRFILVAVLVSFVFLSIMNAEA). 2 cysteine pairs are disulfide-bonded: C59-C67 and C80-C86.

The protein belongs to the plant rapid alkalinization factor (RALF) family.

The protein localises to the secreted. Cell signaling peptide that may regulate plant stress, growth, and development. Mediates a rapid alkalinization of extracellular space by mediating a transient increase in the cytoplasmic Ca(2+) concentration leading to a calcium-dependent signaling events through a cell surface receptor and a concomitant activation of some intracellular mitogen-activated protein kinases. This chain is Protein RALF-like 3 (RALFL3), found in Arabidopsis thaliana (Mouse-ear cress).